We begin with the raw amino-acid sequence, 545 residues long: MSGRAPFIKPVLEYNEHGWGPCEELSVDVPYQPFCKSDRVGKISDWTAPPTERKFANKYVSSFGNSNQYAYFHEDDESTFHLVDTSGFKGFRPFQRGRFRGNTRNNPRTRGRTGRGGAVTGTGGNQPGVGVNERTKYGKGRDNRRQMGRRFGRNAPTRMRESSVVVRSDWVSIEEIDFPRLLKLSLPNVKEGQDVVTCGSLEYYDKTYDRINVKNERPLLKTDRIIHTLTTTDDPVIRRLSKTIGNIFATDEILATIMCCTRSNYSWDVVFDKVGNKIFLDKRDNAQFDLLTVNETALEPPLEEEGSINSPHSLAMEATLINHNFCQQVLRGGDQKKYQFEEPYTLEESGVDLVSIGYRYKQWDLGNNIILIARCKHNGVLQGPNGEVQFLSIRALNEWDSKASNSLEWRQKLDTQHGAVLASELRNNACKLARWTVESVLSGSDQLKLGYVSRVSTRDHLRHVILRTQQFKPQEFSTQINLSMDNAWGILRCLIDIVMKQPDGKYLLMKDPNKPMVRLYDVPENAFESSDEDDLSDDKLFLLSN.

The tract at residues F94–G148 is disordered. Positions Q95–T113 are enriched in basic residues. Positions G114–P127 are enriched in gly residues. The segment covering E133–R145 has biased composition (basic and acidic residues). Residues Q287–P301 form an RNA gate region.

It belongs to the eIF-3 subunit D family. Component of the eukaryotic translation initiation factor 3 (eIF-3) complex. The eIF-3 complex interacts with pix.

Its subcellular location is the cytoplasm. Its function is as follows. mRNA cap-binding component of the eukaryotic translation initiation factor 3 (eIF-3) complex, which is involved in protein synthesis of a specialized repertoire of mRNAs and, together with other initiation factors, stimulates binding of mRNA and methionyl-tRNAi to the 40S ribosome. The eIF-3 complex specifically targets and initiates translation of a subset of mRNAs involved in cell proliferation. In the eIF-3 complex, eif3d specifically recognizes and binds the 7-methylguanosine cap of a subset of mRNAs. The polypeptide is Eukaryotic translation initiation factor 3 subunit D-2 (Drosophila pseudoobscura pseudoobscura (Fruit fly)).